Here is a 545-residue protein sequence, read N- to C-terminus: Chaperonin GroEL (545 aa).

ATP-binding positions include 30–33 (TLGP), Lys-51, 87–91 (DGTTT), Gly-415, and Asp-495.

Belongs to the chaperonin (HSP60) family. As to quaternary structure, forms a cylinder of 14 subunits composed of two heptameric rings stacked back-to-back. Interacts with the co-chaperonin GroES.

The protein resides in the cytoplasm. It catalyses the reaction ATP + H2O + a folded polypeptide = ADP + phosphate + an unfolded polypeptide.. Together with its co-chaperonin GroES, plays an essential role in assisting protein folding. The GroEL-GroES system forms a nano-cage that allows encapsulation of the non-native substrate proteins and provides a physical environment optimized to promote and accelerate protein folding. This Shewanella sp. (strain ANA-3) protein is Chaperonin GroEL.